The following is a 428-amino-acid chain: Divalent metal cation transporter MntH (428 aa).

11 consecutive transmembrane segments (helical) span residues 33–53 (WYLLGPAFVAAIAYVDPGNVA), 60–80 (AQFGYLLLWVIVAANVMAALV), 114–134 (QAEIVAMATDVAEVIGGAIAL), 136–156 (IMFNLPLPIGGIITGVVSLLL), 171–191 (VITALLLVIAIGFTASFFVVT), 210–230 (SVLLAAAIMGATVMPHAVYLH), 258–278 (VGLAMLIAGGVNAAMLLVAAL), 299–319 (TLGATIAVLFAVGLLASGLAS), 334–356 (LLHWSVPMLVRRLITLGPALAIL), 365–385 (TLVLSQVVLSFGIPFAVLPLV), and 406–426 (VGWVVAVMVSLLNVMLIYLTV).

This sequence belongs to the NRAMP family.

Its subcellular location is the cell membrane. Its function is as follows. H(+)-stimulated, divalent metal cation uptake system. Transports zinc and iron. Can also interact with manganese and copper. This Mycobacterium tuberculosis (strain CDC 1551 / Oshkosh) protein is Divalent metal cation transporter MntH.